The primary structure comprises 41 residues: Photosystem I reaction center subunit IX (41 aa).

A helical membrane pass occupies residues 7–27 (YLSTAPVLLTLWMTFTAGFII).

Belongs to the PsaJ family.

It localises to the plastid. It is found in the chloroplast thylakoid membrane. Functionally, may help in the organization of the PsaE and PsaF subunits. This is Photosystem I reaction center subunit IX from Thalassiosira pseudonana (Marine diatom).